The following is a 2348-amino-acid chain: Transcription factor HIVEP3 (2348 aa).

A disordered region spans residues 1 to 105 (MDPDQSIKGT…AFMSPGKPEH (105 aa)). The segment covering 27-72 (IQTSVSSSAPYPGSGTTAPSESATQELLATQPFSGPSQEKTGQQQK) has biased composition (polar residues). C2H2-type zinc fingers lie at residues 185 to 207 (YICQ…IRSH) and 213 to 235 (YPCG…RKSH). A ZAS1 region spans residues 185-235 (YICQYCSRPCAKPSVLQKHIRSHTGERPYPCGPCGFSFKTKSNLYKHRKSH). Positions 204–1055 (IRSHTGERPY…KGKQESSEEP (852 aa)) are no DNA binding activity or transactivation activity, but complete prevention of TRAF-dependent NF-Kappa-B activation; associates with TRAF2 and JUN. 3 disordered regions span residues 239-401 (IKAG…SPPN), 475-532 (DSVK…PLLR), and 561-628 (ADPE…TKKG). The interval 257-280 (EMERIPGEEFEEPTEGESTDSEEE) is acidic 1. A compositionally biased stretch (acidic residues) spans 264–281 (EEFEEPTEGESTDSEEET). Over residues 298 to 323 (PLLSSSLYSSGSHGSSQERCSLSQSS) the composition is skewed to low complexity. A compositionally biased stretch (basic and acidic residues) spans 338 to 352 (SSEHPLSHKPEDTHT). Composition is skewed to polar residues over residues 372–401 (TFLS…SPPN) and 485–495 (TRRSSVESPKS). Low complexity-rich tracts occupy residues 513-527 (QSLL…STHP) and 589-605 (PLGG…SSKD). The segment covering 606–623 (PTSKPSDEPEPKESDLTK) has biased composition (basic and acidic residues). The CCHC HIVEP-type zinc finger occupies 633–663 (GANYECTICGARYKKRDNYEAHKKYYCSELQ). Disordered regions lie at residues 692–1098 (KLGA…PPYT), 1229–1274 (LPPV…TSAP), 1386–1427 (EGCS…KADE), 1441–1555 (STED…EGTD), and 1654–1694 (EVHL…GEPA). Over residues 736 to 749 (STKSPAEASKSAPS) the composition is skewed to low complexity. An acidic 2 region spans residues 844 to 865 (EEPDRPDTEPEPPPKEPEKTEE). The span at 845-865 (EPDRPDTEPEPPPKEPEKTEE) shows a compositional bias: basic and acidic residues. The Nuclear localization signal signature appears at 885–891 (PKKKRLR). Positions 893-929 (AEMAQSSGESSFESSVPLSRSPSQESSISLSGSSRSA) are enriched in low complexity. Residues 930 to 939 (SFDREDHGKA) are compositionally biased toward basic and acidic residues. Composition is skewed to polar residues over residues 975–985 (SEQSPNVPHSS), 1062–1073 (TKSSVPQISVGT), and 1247–1256 (SSSTEYSSDI). A coiled-coil region spans residues 1409-1433 (METQQQKRVKEEEASKADEKLELVS). Basic and acidic residues-rich tracts occupy residues 1416 to 1427 (RVKEEEASKADE), 1442 to 1452 (TEDRKKTEKPH), and 1518 to 1527 (VKKEDPKEQT). Residues 1538-1547 (LPLSDTSPKP) show a composition bias toward low complexity. A compositionally biased stretch (basic and acidic residues) spans 1665-1694 (SQKDPARVEKEEKQGKAEEGTPTSKRGEPA). 2 consecutive C2H2-type zinc fingers follow at residues 1720 to 1742 (YVCE…IRTH) and 1748 to 1772 (YVCK…SKAH). The ZAS2 stretch occupies residues 1720-1772 (YVCEECGIRCKKPSMLKKHIRTHTDVRPYVCKHCHFAFKTKGNLTKHMKSKAH). Residues 1783–1841 (EELEAEEGTSDDLHQDSEGQEGAEAVEEHQFSDLEDSDSDSDLDEDEEEEEEEEESQDE) form an acidic 3 region. Disordered regions lie at residues 1786–1990 (EAEE…HLCG) and 2009–2038 (PAGL…ESPP). The span at 1815–1840 (DLEDSDSDSDLDEDEEEEEEEEESQD) shows a compositional bias: acidic residues. The segment covering 1871-1902 (PDSTSDEVPQGSSISEATHLTASSCSTPSRGT) has biased composition (polar residues). 5 repeat units span residues 1897–1900 (TPSR), 1927–1930 (SPRR), 1933–1936 (SPSK), 1961–1964 (SPAR), and 2024–2027 (SPTR). Residues 1952–1961 (KNDSSPQQCS) are compositionally biased toward polar residues. The tract at residues 2053–2148 (SPSADKSGLG…QLLSRAPCPL (96 aa)) is 5 X 4 AA tandem repeats of [ST]-P-X-[RK]. Disordered stretches follow at residues 2184 to 2265 (SDLT…QGHQ) and 2284 to 2348 (KASS…PPSI). The span at 2203-2216 (SPSASVSPVAKVSK) shows a compositional bias: low complexity. Residues 2293-2314 (RSSSMDCLAETSTYSPPRSRNL) are compositionally biased toward polar residues.

In terms of assembly, interacts with TRAF1 and TRAF2 as well as with JUN. Forms a multimeric complex with RUNX2 and E3 ubiquitin ligase WWP1. In terms of processing, phosphorylated on threonine and serine residues. Phosphorylation by cyclin-dependent kinase CDK1 decreases HIVEP3 DNA binding affinity, and by epidermal growth factor receptor kinase increases its DNA binding affinity. In terms of tissue distribution, expressed in macrophages, lymphocytes, brain, thymus, spleen and bone marrow. Expressed in osteoblasts, whole bone and, to a lesser extent, in osteoclasts.

It localises to the cytoplasm. The protein resides in the nucleus. In terms of biological role, plays a role of transcription factor; binds to recognition signal sequences (Rss heptamer) for somatic recombination of immunoglobulin and T-cell receptor gene segments; Also binds to the kappa-B motif of gene such as S100A4, involved in cell progression and differentiation. Kappa-B motif is a gene regulatory element found in promoters and enhancers of genes involved in immunity, inflammation, and growth and that responds to viral antigens, mitogens, and cytokines. Involvement of HIVEP3 in cell growth is strengthened by the fact that its down-regulation promotes cell cycle progression with ultimate formation of multinucleated giant cells. Strongly inhibits TNF-alpha-induced NF-kappa-B activation; Interferes with nuclear factor NF-kappa-B by several mechanisms: as transcription factor, by competing for Kappa-B motif and by repressing transcription in the nucleus; through a non transcriptional process, by inhibiting nuclear translocation of RELA by association with TRAF2, an adapter molecule in the tumor necrosis factor signaling, which blocks the formation of IKK complex. Interaction with TRAF proteins inhibits both NF-Kappa-B-mediated and c-Jun N-terminal kinase/JNK-mediated responses that include apoptosis and pro-inflammatory cytokine gene expression. Positively regulates the expression of IL2 in T-cell. Essential regulator of adult bone formation. The polypeptide is Transcription factor HIVEP3 (Hivep3) (Mus musculus (Mouse)).